The following is a 65-amino-acid chain: Ferredoxin-like protein in vnf region (65 aa).

2 consecutive 4Fe-4S ferredoxin-type domains span residues 2–30 (AMAIDGYECTVCGDCEPVCPTGSIVFRDD) and 32–65 (YAIEADSCNECTDVGEPRCLGVCPVDLCIQPLDD). The [4Fe-4S] cluster site is built by cysteine 10, cysteine 13, cysteine 16, cysteine 20, cysteine 39, cysteine 42, cysteine 50, and cysteine 54.

[4Fe-4S] cluster is required as a cofactor.

This is Ferredoxin-like protein in vnf region from Azotobacter vinelandii.